The chain runs to 588 residues: Pre-mRNA 3'-end-processing factor FIP1 (588 aa).

Residues 1–10 are compositionally biased toward basic and acidic residues; it reads MSAGEVERLV. 3 disordered regions span residues 1–81, 223–291, and 334–588; these read MSAG…EDDV, QGRT…ESPD, and VDNN…TPAE. The interval 1 to 96 is sufficient for interaction with PAPOLA; sequence MSAGEVERLV…DIKTGAPQYG (96 aa). Residues 1–341 are necessary for stimulating PAPOLA activity; the sequence is MSAGEVERLV…TAVDNNFSKP (341 aa). Acidic residues-rich tracts occupy residues 19–40 and 66–80; these read GDEE…EEEN and TEDD…DEDD. Serine 70, serine 72, and serine 74 each carry phosphoserine. The interval 122 to 228 is sufficient for interaction with CPSF4; it reads KGVDLDAPGS…FKVQQGRTGN (107 aa). Residues 259 to 270 show a composition bias toward low complexity; that stretch reads STSSQSQTSTAS. Basic and acidic residues predominate over residues 280–291; it reads WQDRYGRAESPD. Position 289 is a phosphoserine (serine 289). The segment covering 340-398 has biased composition (pro residues); sequence KPPPFFPPGAPPTHLPPPPFLPPPPTVSTAPPLIPPPGIPITVPPPGFPPPPGAPPPSL. Tyrosine 420 carries the phosphotyrosine modification. Residues 437–588 form a sufficient for interaction with CPSF1 and CSTF3 region; the sequence is SLVDTSKQWD…QESTEATPAE (152 aa). The segment covering 448 to 486 has biased composition (basic and acidic residues); sequence YARREKDRDRERDRDRERDRDRDRERERTRERERERDHS. The arg/Asp/Glu-rich domain stretch occupies residues 451-484; the sequence is REKDRDRERDRDRERDRDRDRERERTRERERERD. Serine 486 is subject to Phosphoserine. The residue at position 488 (threonine 488) is a Phosphothreonine. Residues serine 490 and serine 494 each carry the phosphoserine modification. Basic and acidic residues predominate over residues 495–522; sequence DEERYRYREYAERGYERHRASREKEERH. A compositionally biased stretch (basic residues) spans 536–545; sequence KSSRSNSRRR. Serine 548 bears the Phosphoserine mark. Positions 554–564 are enriched in basic residues; the sequence is HRRHKHKKSKR.

The protein belongs to the FIP1 family. In terms of assembly, component of the cleavage and polyadenylation specificity factor (CPSF) complex, composed of CPSF1, CPSF2, CPSF3, CPSF4 and FIP1L1. Found in a complex with CPSF1, FIP1L1 and PAPOLA. Interacts with CPSF1, CPSF4, CSTF2 and CSTF3. Interacts with AHCYL1 (when phosphorylated); the interaction is direct and associates AHCYL1 with the CPSF complex and RNA. Interacts with PAPOLA; the interaction seems to be increased by the interaction with AHCYL1. Interacts with NUDT21/CPSF5; this interaction occurs in a RNA sequence-specific manner. Interacts (preferentially via unphosphorylated form and Arg/Glu/Asp-rich domain) with CPSF6 (via Arg/Ser-rich domain); this interaction mediates, at least in part, the interaction between the CFIm and CPSF complexes and may be inhibited by CPSF6 hyper-phosphorylation. Interacts (preferentially via unphosphorylated form and Arg/Asp/Glu-rich domain) with CPSF7 (via Arg/Ser-rich domain); this interaction mediates, at least in part, the interaction between the CFIm and CPSF complexes and may be inhibited by CPSF7 hyper-phosphorylation.

The protein resides in the nucleus. In terms of biological role, component of the cleavage and polyadenylation specificity factor (CPSF) complex that plays a key role in pre-mRNA 3'-end formation, recognizing the AAUAAA signal sequence and interacting with poly(A) polymerase and other factors to bring about cleavage and poly(A) addition. FIP1L1 contributes to poly(A) site recognition and stimulates poly(A) addition. Binds to U-rich RNA sequence elements surrounding the poly(A) site. May act to tether poly(A) polymerase to the CPSF complex. The sequence is that of Pre-mRNA 3'-end-processing factor FIP1 (FIP1L1) from Pongo abelii (Sumatran orangutan).